The primary structure comprises 689 residues: MKPVHERSQECLPPKKRDLPVTSEDMGRTTSCSTNHTPSSDASEWSRGVVVAGQSQAGARVSLGGDGAEAITGLTVDQYGMLYKVAVPPATFSPTGLPSVVNMSPLPPTFNVASSLIQHPGIHYPPLHYAQLPSTSLQFIGSPYSLPYAVPPNFLPSPLLSPSANLATSHLPHFVPYASLLAEGATPPPQAPSPAHSFNKAPSATSPSGQLPHHSSTQPLDLAPGRMPIYYQMSRLPAGYTLHETPPAGASPVLTPQESQSALEAAAANGGQRPRERNLVRRESEALDSPNSKGEGQGLVPVVECVVDGQLFSGSQTPRVEVAAPAHRGTPDTDLEVQRVVGALASQDYRVVAAQRKEEPSPLNLSHHTPDHQGEGRGSARNPAELAEKSQARGFYPQSHQEPVKHRPLPKAMVVANGNLVPTGTDSGLLPVGSEILVASSLDVQARATFPDKEPTPPPITSSHLPSHFMKGAIIQLATGELKRVEDLQTQDFVRSAEVSGGLKIDSSTVVDIQESQWPGFVMLHFVVGEQQSKVSIEVPPEHPFFVYGQGWSSCSPGRTTQLFSLPCHRLQVGDVCISISLQSLNSNSVSQASCAPPSQLGPPRERPERTVLGSRELCDSEGKSQPAGEGSRVVEPSQPESGAQACWPAPSFQRYSMQGEEARAALLRPSFIPQEVKLSIEGRSNAGK.

Residues 1–19 show a composition bias toward basic and acidic residues; sequence MKPVHERSQECLPPKKRDL. Disordered stretches follow at residues 1-46, 185-223, and 242-297; these read MKPV…SEWS, ATPP…LDLA, and LHET…GEGQ. The tract at residues 20–197 is interaction with NCOR2 and ATXN1; sequence PVTSEDMGRT…PPQAPSPAHS (178 aa). A self-association region spans residues 20-197; the sequence is PVTSEDMGRT…PPQAPSPAHS (178 aa). Composition is skewed to polar residues over residues 28 to 43 and 200 to 219; these read RTTS…SDAS and KAPS…STQP. Residues 257–268 show a composition bias toward low complexity; that stretch reads QESQSALEAAAA. The span at 273 to 285 shows a compositional bias: basic and acidic residues; the sequence is RPRERNLVRRESE. Ser-284 carries the post-translational modification Phosphoserine. A Phosphothreonine modification is found at Thr-330. The interval 357 to 405 is disordered; it reads KEEPSPLNLSHHTPDHQGEGRGSARNPAELAEKSQARGFYPQSHQEPVK. Ser-361 is modified (phosphoserine). An AXH domain is found at 457–588; sequence PPPITSSHLP…SISLQSLNSN (132 aa). Ser-615 is subject to Phosphoserine. A disordered region spans residues 617-647; sequence ELCDSEGKSQPAGEGSRVVEPSQPESGAQAC.

The protein belongs to the ATXN1 family. Homodimer. Interacts with CIC. Interacts (via AXH domain) with NCOR2. Interacts with ATXN1. Directly interacts with RBPJ; this interaction is disrupted in the presence of Notch intracellular domain. Competes with ATXN1 for RBPJ-binding. Found in a complex with CIC and ATXN1. As to expression, expressed in cerebellum and cerebral cortex.

The protein resides in the nucleus. Its subcellular location is the cell projection. The protein localises to the dendrite. Functionally, chromatin-binding factor that repress Notch signaling in the absence of Notch intracellular domain by acting as a CBF1 corepressor. Binds to the HEY promoter and might assist, along with NCOR2, RBPJ-mediated repression. Can suppress ATXN1 cytotoxicity in spinocerebellar ataxia type 1 (SCA1). In concert with CIC and ATXN1, involved in brain development. The polypeptide is Ataxin-1-like (ATXN1L) (Homo sapiens (Human)).